The chain runs to 149 residues: Arginine repressor (149 aa).

The protein belongs to the ArgR family.

The protein resides in the cytoplasm. Its pathway is amino-acid biosynthesis; L-arginine biosynthesis [regulation]. Functionally, regulates arginine biosynthesis genes. The sequence is that of Arginine repressor from Geobacillus kaustophilus (strain HTA426).